A 77-amino-acid chain; its full sequence is Large ribosomal subunit protein bL28 (77 aa).

This sequence belongs to the bacterial ribosomal protein bL28 family.

The sequence is that of Large ribosomal subunit protein bL28 from Paracidovorax citrulli (strain AAC00-1) (Acidovorax citrulli).